We begin with the raw amino-acid sequence, 611 residues long: Broad-specificity linear acyl-CoA dehydrogenase FadE5 (611 aa).

FAD-binding positions include 162 to 165 (MVLT), S171, and T198. S171 is an a 2,3-saturated acyl-CoA binding site. A 2,3-saturated acyl-CoA contacts are provided by residues 224-225 (TK) and R301. R326 is a binding site for FAD. K338 serves as a coordination point for a 2,3-saturated acyl-CoA. 420 to 424 (QTLGG) provides a ligand contact to FAD. Position 447 (E447) interacts with a 2,3-saturated acyl-CoA. The active-site Proton acceptor is the E447. FAD is bound at residue T449. A 2,3-saturated acyl-CoA contacts are provided by residues D456 and 460–461 (RK).

The protein belongs to the acyl-CoA dehydrogenase family. Homodimer. It depends on FAD as a cofactor.

The enzyme catalyses a long-chain 2,3-saturated fatty acyl-CoA + oxidized [electron-transfer flavoprotein] + H(+) = a long-chain (2E)-enoyl-CoA + reduced [electron-transfer flavoprotein]. It catalyses the reaction a medium-chain 2,3-saturated fatty acyl-CoA + oxidized [electron-transfer flavoprotein] + H(+) = a medium-chain (2E)-enoyl-CoA + reduced [electron-transfer flavoprotein]. The catalysed reaction is a short-chain 2,3-saturated fatty acyl-CoA + oxidized [electron-transfer flavoprotein] + H(+) = a short-chain (2E)-enoyl-CoA + reduced [electron-transfer flavoprotein]. It carries out the reaction octadecanoyl-CoA + oxidized [electron-transfer flavoprotein] + H(+) = (2E)-octadecenoyl-CoA + reduced [electron-transfer flavoprotein]. The enzyme catalyses oxidized [electron-transfer flavoprotein] + hexadecanoyl-CoA + H(+) = (2E)-hexadecenoyl-CoA + reduced [electron-transfer flavoprotein]. It catalyses the reaction dodecanoyl-CoA + oxidized [electron-transfer flavoprotein] + H(+) = (2E)-dodecenoyl-CoA + reduced [electron-transfer flavoprotein]. The catalysed reaction is decanoyl-CoA + oxidized [electron-transfer flavoprotein] + H(+) = (2E)-decenoyl-CoA + reduced [electron-transfer flavoprotein]. It carries out the reaction hexanoyl-CoA + oxidized [electron-transfer flavoprotein] + H(+) = (2E)-hexenoyl-CoA + reduced [electron-transfer flavoprotein]. The enzyme catalyses butanoyl-CoA + oxidized [electron-transfer flavoprotein] + H(+) = (2E)-butenoyl-CoA + reduced [electron-transfer flavoprotein]. The protein operates within lipid metabolism; fatty acid metabolism. Functionally, acyl-CoA dehydrogenase that exhibits broad specificity for linear acyl-CoA substrates, with a preference for long-chain substrates. This Mycobacterium tuberculosis (strain ATCC 25618 / H37Rv) protein is Broad-specificity linear acyl-CoA dehydrogenase FadE5.